Consider the following 94-residue polypeptide: Small ribosomal subunit protein bS6 (94 aa).

This sequence belongs to the bacterial ribosomal protein bS6 family.

Binds together with bS18 to 16S ribosomal RNA. The chain is Small ribosomal subunit protein bS6 from Fusobacterium nucleatum subsp. nucleatum (strain ATCC 25586 / DSM 15643 / BCRC 10681 / CIP 101130 / JCM 8532 / KCTC 2640 / LMG 13131 / VPI 4355).